A 369-amino-acid polypeptide reads, in one-letter code: Cyclin-dependent kinase 5 activator 2 (369 aa).

The segment covering 1 to 11 has biased composition (polar residues); the sequence is MGTVLSLSPAS. Disordered stretches follow at residues 1–55, 72–176, and 330–369; these read MGTV…SRLK, ASAK…SPRR, and EAAA…NLDR. G2 is lipidated: N-myristoyl glycine. Basic residues predominate over residues 74–84; the sequence is AKKKKGSKKVT. Residue T84 is modified to Phosphothreonine. A compositionally biased stretch (basic and acidic residues) spans 99 to 112; that stretch reads RNRENLLRKGRDGP. Positions 122 to 144 are enriched in low complexity; that stretch reads AVPVPTVPTTAATCEPPSGGSAA. Pro residues predominate over residues 145–171; that stretch reads APPPGSGGGKPPPPPPPAPQAAPPAPG. Over residues 331–352 the composition is skewed to low complexity; the sequence is AAASTGGPPSGSSASTTSSSSA.

It belongs to the cyclin-dependent kinase 5 activator family. As to quaternary structure, heterodimer of a catalytic subunit and a regulatory subunit. Myristoylated. The Gly-2-Ala mutant is absent of the cell periphery, suggesting that a proper myristoylation signal is essential for the proper distribution of CDK5R2 (p39).

The protein resides in the cell membrane. Activator of CDK5/TPKII. The protein is Cyclin-dependent kinase 5 activator 2 (Cdk5r2) of Mus musculus (Mouse).